The sequence spans 342 residues: Anthranilate phosphoribosyltransferase (342 aa).

5-phospho-alpha-D-ribose 1-diphosphate-binding positions include glycine 80, 83 to 84 (GD), threonine 88, 90 to 93 (NIST), 108 to 116 (KHGNRAVSS), and serine 120. Glycine 80 is an anthranilate binding site. Serine 92 is a Mg(2+) binding site. An anthranilate-binding site is contributed by asparagine 111. Residue arginine 166 participates in anthranilate binding. Mg(2+)-binding residues include aspartate 225 and glutamate 226.

It belongs to the anthranilate phosphoribosyltransferase family. Homodimer. Mg(2+) serves as cofactor.

It carries out the reaction N-(5-phospho-beta-D-ribosyl)anthranilate + diphosphate = 5-phospho-alpha-D-ribose 1-diphosphate + anthranilate. It participates in amino-acid biosynthesis; L-tryptophan biosynthesis; L-tryptophan from chorismate: step 2/5. Catalyzes the transfer of the phosphoribosyl group of 5-phosphorylribose-1-pyrophosphate (PRPP) to anthranilate to yield N-(5'-phosphoribosyl)-anthranilate (PRA). This is Anthranilate phosphoribosyltransferase from Halalkalibacterium halodurans (strain ATCC BAA-125 / DSM 18197 / FERM 7344 / JCM 9153 / C-125) (Bacillus halodurans).